Consider the following 479-residue polypeptide: UDP-glycosyltransferase 84A3 (479 aa).

Residue His19 is the Proton acceptor of the active site. His19 is an an anthocyanidin binding site. UDP-alpha-D-glucose-binding residues include Gln346, His361, Trp364, Asn365, Ser366, and Glu369. An an anthocyanidin-binding site is contributed by Gly384. Asp385 and Gln386 together coordinate UDP-alpha-D-glucose.

The protein belongs to the UDP-glycosyltransferase family.

The enzyme catalyses (E)-4-coumarate + UDP-alpha-D-glucose = 4-O-(beta-D-glucosyl)-trans-4-coumarate + UDP + H(+). It catalyses the reaction (E)-ferulate + UDP-alpha-D-glucose = 1-O-[(E)-feruloyl]-beta-D-glucose + UDP. The catalysed reaction is (E)-caffeate + UDP-alpha-D-glucose = 1-O-[(E)-caffeoyl]-beta-D-glucose + UDP. It carries out the reaction (E)-sinapate + UDP-alpha-D-glucose = 1-O-(trans-sinapoyl)-beta-D-glucose + UDP. The enzyme catalyses (E)-cinnamate + UDP-alpha-D-glucose = 1-O-(trans-cinnamoyl)-beta-D-glucose + UDP. UDP-glucosyltransferase that forms glucose esters with phenylpropanoids. Glucosylates 4-coumarate, ferulate, caffeate, sinapate and cinnamate. The polypeptide is UDP-glycosyltransferase 84A3 (Arabidopsis thaliana (Mouse-ear cress)).